The chain runs to 251 residues: Indole-3-glycerol phosphate synthase (251 aa).

A compositionally biased stretch (polar residues) spans 1-12 (MDDSSSLASPVQ). Residues 1–27 (MDDSSSLASPVQSILAAARRRDPPTRR) are disordered.

It belongs to the TrpC family.

It carries out the reaction 1-(2-carboxyphenylamino)-1-deoxy-D-ribulose 5-phosphate + H(+) = (1S,2R)-1-C-(indol-3-yl)glycerol 3-phosphate + CO2 + H2O. It functions in the pathway amino-acid biosynthesis; L-tryptophan biosynthesis; L-tryptophan from chorismate: step 4/5. In Halobacterium salinarum (strain ATCC 700922 / JCM 11081 / NRC-1) (Halobacterium halobium), this protein is Indole-3-glycerol phosphate synthase.